Here is a 381-residue protein sequence, read N- to C-terminus: Chaperone protein DnaJ (381 aa).

The J domain maps to D5–G70. A CR-type zinc finger spans residues G140–D218. Positions 153, 156, 170, 173, 192, 195, 206, and 209 each coordinate Zn(2+). CXXCXGXG motif repeat units follow at residues C153–G160, C170–G177, C192–G199, and C206–G213.

Belongs to the DnaJ family. In terms of assembly, homodimer. Zn(2+) is required as a cofactor.

Its subcellular location is the cytoplasm. Functionally, participates actively in the response to hyperosmotic and heat shock by preventing the aggregation of stress-denatured proteins and by disaggregating proteins, also in an autonomous, DnaK-independent fashion. Unfolded proteins bind initially to DnaJ; upon interaction with the DnaJ-bound protein, DnaK hydrolyzes its bound ATP, resulting in the formation of a stable complex. GrpE releases ADP from DnaK; ATP binding to DnaK triggers the release of the substrate protein, thus completing the reaction cycle. Several rounds of ATP-dependent interactions between DnaJ, DnaK and GrpE are required for fully efficient folding. Also involved, together with DnaK and GrpE, in the DNA replication of plasmids through activation of initiation proteins. In Ruegeria pomeroyi (strain ATCC 700808 / DSM 15171 / DSS-3) (Silicibacter pomeroyi), this protein is Chaperone protein DnaJ.